Here is a 418-residue protein sequence, read N- to C-terminus: AA14 family lytic polysaccharide monooxygenase B (418 aa).

A signal peptide spans 1 to 18 (MIPVFLAAVAAFLPLTSG). N-linked (GlcNAc...) asparagine glycans are attached at residues Asn-31, Asn-94, and Asn-151. Intrachain disulfides connect Cys-85-Cys-108, Cys-127-Cys-154, Cys-171-Cys-176, and Cys-178-Cys-200. 2 N-linked (GlcNAc...) asparagine glycosylation sites follow: Asn-201 and Asn-235. Cys-220 and Cys-236 form a disulfide bridge. Low complexity predominate over residues 307–343 (AAATPAPSSSGSSPSSSSPGSSSTASTTSTSGPRPSA). Positions 307–364 (AAATPAPSSSGSSPSSSSPGSSSTASTTSTSGPRPSARGFRRSTGERPPTGVPTPRKS) are disordered.

It belongs to the polysaccharide monooxygenase AA14 family. Cu(2+) is required as a cofactor.

It localises to the secreted. Lytic polysaccharide monooxygenase (LPMO) that oxidatively cleaves xylan with both C1 and C4 regioselectivity and that specifically targets the protective shield made by heteroxylans that cover cellulose microfibrils in wood. Catalysis by LPMOs requires the reduction of the active-site copper from Cu(II) to Cu(I) by a reducing agent and H(2)O(2) or O(2) as a cosubstrate. Cleavage occurs only when xylans are bound to cellulose and not when they are in solution. Increases the efficiency of wood saccharification through oxidative cleavage of highly refractory xylan-coated cellulose fibers via synergistic relationship with xylan-active enzymes, xylobiohydrolases and cellobiohydrolases. The chain is AA14 family lytic polysaccharide monooxygenase B from Trametes coccinea (strain BRFM310) (Pycnoporus coccineus).